We begin with the raw amino-acid sequence, 247 residues long: Ubiquinone biosynthesis O-methyltransferase (247 aa).

Positions 41, 72, 93, and 136 each coordinate S-adenosyl-L-methionine.

Belongs to the methyltransferase superfamily. UbiG/COQ3 family.

It catalyses the reaction a 3-demethylubiquinol + S-adenosyl-L-methionine = a ubiquinol + S-adenosyl-L-homocysteine + H(+). The catalysed reaction is a 3-(all-trans-polyprenyl)benzene-1,2-diol + S-adenosyl-L-methionine = a 2-methoxy-6-(all-trans-polyprenyl)phenol + S-adenosyl-L-homocysteine + H(+). It participates in cofactor biosynthesis; ubiquinone biosynthesis. O-methyltransferase that catalyzes the 2 O-methylation steps in the ubiquinone biosynthetic pathway. The polypeptide is Ubiquinone biosynthesis O-methyltransferase (Bartonella tribocorum (strain CIP 105476 / IBS 506)).